Here is a 760-residue protein sequence, read N- to C-terminus: Exostosin-1 (760 aa).

The Cytoplasmic portion of the chain corresponds to 1–6; the sequence is MQAKKR. Residues 7–25 form a helical; Signal-anchor for type II membrane protein membrane-spanning segment; it reads YILVFVSCAFLAYAYFGGY. The Lumenal segment spans residues 26–760; the sequence is RLKVSPLRPR…KYRQIELVGS (735 aa). Asparagine 71 and asparagine 327 each carry an N-linked (GlcNAc...) asparagine glycan. Arginine 437 contributes to the UDP-N-acetyl-alpha-D-glucosamine binding site. Residue asparagine 476 is glycosylated (N-linked (GlcNAc...) asparagine). Residues 540-560 form a disordered region; it reads LGGSTRSQGAGPTSQTTEGRP. A compositionally biased stretch (polar residues) spans 541 to 560; that stretch reads GGSTRSQGAGPTSQTTEGRP. UDP-N-acetyl-alpha-D-glucosamine-binding residues include arginine 565, aspartate 581, glutamate 582, aspartate 583, glutamate 669, aspartate 670, and arginine 713. Aspartate 583 lines the Mn(2+) pocket. Cysteines 668 and 716 form a disulfide. Residue aspartate 670 is part of the active site.

It belongs to the glycosyltransferase 47 family. Interacts with sau. Requires Mn(2+) as cofactor. Ubiquitously expressed in early embryos. Later (in stage 10 embryos), it is expressed at higher level in the nervous system. Ubiquitously expressed in wing imaginal disk.

The protein localises to the endoplasmic reticulum membrane. The protein resides in the golgi apparatus membrane. It catalyses the reaction 3-O-{[(1-&gt;4)-beta-D-GlcA-(1-&gt;4)-alpha-D-GlcNAc](n)-(1-&gt;4)-beta-D-GlcA-(1-&gt;3)-beta-D-Gal-(1-&gt;3)-beta-D-Gal-(1-&gt;4)-beta-D-Xyl}-L-seryl-[protein] + UDP-N-acetyl-alpha-D-glucosamine = 3-O-{alpha-D-GlcNAc-[(1-&gt;4)-beta-D-GlcA-(1-&gt;4)-alpha-D-GlcNAc](n)-(1-&gt;4)-beta-D-GlcA-(1-&gt;3)-beta-D-Gal-(1-&gt;3)-beta-D-Gal-(1-&gt;4)-beta-D-Xyl}-L-seryl-[protein] + UDP + H(+). The catalysed reaction is 3-O-{alpha-D-GlcNAc-[(1-&gt;4)-beta-D-GlcA-(1-&gt;4)-alpha-D-GlcNAc](n)-(1-&gt;4)-beta-D-GlcA-(1-&gt;3)-beta-D-Gal-(1-&gt;3)-beta-D-Gal-(1-&gt;4)-beta-D-Xyl}-L-seryl-[protein] + UDP-alpha-D-glucuronate = 3-O-{[(1-&gt;4)-beta-D-GlcA-(1-&gt;4)-alpha-D-GlcNAc](n+1)-(1-&gt;4)-beta-D-GlcA-(1-&gt;3)-beta-D-Gal-(1-&gt;3)-beta-D-Gal-(1-&gt;4)-beta-D-Xyl}-L-seryl-[protein] + UDP + H(+). It participates in protein modification; protein glycosylation. Its pathway is glycan metabolism; heparan sulfate biosynthesis. It functions in the pathway glycan metabolism; heparin biosynthesis. Its function is as follows. Glycosyltransferase required for the biosynthesis of heparan-sulfate and responsible for the alternating addition of beta-1-4-linked glucuronic acid (GlcA) and alpha-1-4-linked N-acetylglucosamine (GlcNAc) units to nascent heparan sulfate chains. Botv is the trigger of heparan sulfate chain initiation and polymerization takes place by a complex of ttv and sotv. Plays a central role in the diffusion of morphogens hedgehog (hh), wingless (wg) and decapentaplegic (dpp) via its role in heparan sulfate proteoglycans (HSPGs) biosynthesis which are required for movement of hh, dpp and wg morphogens. This chain is Exostosin-1 (ttv), found in Drosophila melanogaster (Fruit fly).